Here is a 437-residue protein sequence, read N- to C-terminus: Ribulose bisphosphate carboxylase-like protein (437 aa).

Residue K176 is the Proton acceptor of the active site. 3 residues coordinate Mg(2+): K202, D204, and E205. K202 bears the N6-carboxylysine mark. Residue H293 is the Proton acceptor of the active site.

It belongs to the RuBisCO large chain family. Type IV subfamily. Homodimer. It depends on Mg(2+) as a cofactor.

Its function is as follows. May be involved in sulfur metabolism and oxidative stress response. Does not show RuBisCO activity. The polypeptide is Ribulose bisphosphate carboxylase-like protein (Archaeoglobus fulgidus (strain ATCC 49558 / DSM 4304 / JCM 9628 / NBRC 100126 / VC-16)).